The following is a 416-amino-acid chain: Adipocyte plasma membrane-associated protein (416 aa).

Residues 1-32 form a disordered region; it reads MSEADGLRQRRPLRPQVVTDDDGQAPEAKDGS. Ser-2 is subject to N-acetylserine. Topologically, residues 2-40 are cytoplasmic; it reads SEADGLRQRRPLRPQVVTDDDGQAPEAKDGSSFSGRVFR. Thr-19 is subject to Phosphothreonine. Residues 41–61 form a helical; Signal-anchor for type II membrane protein membrane-spanning segment; sequence VTFLMLAVSLTVPLLGAMMLL. Topologically, residues 62-416 are extracellular; sequence ESPIDPQPLS…FLCRLSLQAV (355 aa). 2 N-linked (GlcNAc...) asparagine glycosylation sites follow: Asn-160 and Asn-196.

Belongs to the strictosidine synthase family. As to expression, liver, glomerular and tubular structures of the kidney, endothelial cells, arterial wall and pancreatic islets of Langerhans (at protein level). Found ubiquitously in adult as well as in embryonic tissues. In adult tissue, the highest expression is found in the liver, placenta and heart. Found on the cell surface of monocytes. In embryonic tissue, the highest expression levels is found in the liver and the kidney.

The protein localises to the membrane. Exhibits strong arylesterase activity with beta-naphthyl acetate and phenyl acetate. May play a role in adipocyte differentiation. The polypeptide is Adipocyte plasma membrane-associated protein (APMAP) (Homo sapiens (Human)).